Consider the following 291-residue polypeptide: Phosphate import ATP-binding protein PstB (291 aa).

Residues 43-286 enclose the ABC transporter domain; that stretch reads ANVKDLSFWY…PKHAMTEEYI (244 aa). 75–82 serves as a coordination point for ATP; that stretch reads GASGCGKS.

Belongs to the ABC transporter superfamily. Phosphate importer (TC 3.A.1.7) family. In terms of assembly, the complex is composed of two ATP-binding proteins (PstB), two transmembrane proteins (PstC and PstA) and a solute-binding protein (PstS).

It is found in the cell inner membrane. The catalysed reaction is phosphate(out) + ATP + H2O = ADP + 2 phosphate(in) + H(+). Functionally, part of the ABC transporter complex PstSACB involved in phosphate import. Responsible for energy coupling to the transport system. This chain is Phosphate import ATP-binding protein PstB, found in Alcaligenes faecalis.